The following is a 308-amino-acid chain: Cell division protein FtsX (308 aa).

Over 1-24 (MISRFFRHLFEALKSLKRNGWMTV) the chain is Extracellular. A helical transmembrane segment spans residues 25–45 (AAVSSVMITLTLVAIFASVIF). The Cytoplasmic segment spans residues 46 to 178 (NTAKLATDIE…NTERLFKLAS (133 aa)). A helical transmembrane segment spans residues 179-199 (FIRVWGLGIAALLIFIAAFLI). The Extracellular segment spans residues 200-236 (SNTIRITIISRSREIQIMRLVGAKNSYIRGPFLLEGA). The chain crosses the membrane as a helical span at residues 237-257 (FIGLLGAIAPSVLVFIVYQIV). Residues 258–276 (YQSVNKSLVGQNLSMISPD) are Cytoplasmic-facing. The helical transmembrane segment at 277–297 (LFSPLMIALLFVIGVFIGSLG) threads the bilayer. Residues 298 to 308 (SGISMRRFLKI) are Extracellular-facing.

This sequence belongs to the ABC-4 integral membrane protein family. FtsX subfamily. In terms of assembly, interacts with FtsE. Interacts (via large extracellular loop) with PcsB (via N-terminal coiled coil domain). This interaction directs PcsB to equatorial and septal sites of dividing cells.

It localises to the cell membrane. Part of the ABC transporter FtsEX involved in asymmetric cellular division facilitating the initiation of sporulation. Required in maintaining normal growth and cellular morphology. This is Cell division protein FtsX from Streptococcus pneumoniae (strain ATCC BAA-255 / R6).